Here is a 300-residue protein sequence, read N- to C-terminus: Ribosomal protein bS6--L-glutamate ligase (300 aa).

Positions 104 to 287 (MQLLARQGID…IAGKMIRWIE (184 aa)) constitute an ATP-grasp domain. Residues Lys141, 178–179 (EY), Asp187, and 211–213 (RSN) each bind ATP. Positions 248, 260, and 262 each coordinate Mg(2+). The Mn(2+) site is built by Asp248, Glu260, and Asn262.

This sequence belongs to the RimK family. Requires Mg(2+) as cofactor. The cofactor is Mn(2+).

Its function is as follows. An L-glutamate ligase that catalyzes the ATP-dependent post-translational addition of glutamate residues to the C-terminus of ribosomal protein bS6 (RpsF). Is also able to catalyze the synthesis of poly-alpha-glutamate in vitro, via ATP hydrolysis from unprotected glutamate as substrate. The number of glutamate residues added to either RpsF or to poly-alpha-glutamate changes with pH. The polypeptide is Ribosomal protein bS6--L-glutamate ligase (Shigella dysenteriae serotype 1 (strain Sd197)).